A 225-amino-acid polypeptide reads, in one-letter code: 3-dehydroquinate dehydratase (225 aa).

3-dehydroquinate is bound by residues 30-32 and Arg-62; that span reads EWR. The active-site Proton donor/acceptor is His-118. Lys-143 acts as the Schiff-base intermediate with substrate in catalysis. 3-dehydroquinate-binding residues include Arg-186, Ser-205, and Gln-209.

The protein belongs to the type-I 3-dehydroquinase family. In terms of assembly, homodimer.

It carries out the reaction 3-dehydroquinate = 3-dehydroshikimate + H2O. The protein operates within metabolic intermediate biosynthesis; chorismate biosynthesis; chorismate from D-erythrose 4-phosphate and phosphoenolpyruvate: step 3/7. In terms of biological role, involved in the third step of the chorismate pathway, which leads to the biosynthesis of aromatic amino acids. Catalyzes the cis-dehydration of 3-dehydroquinate (DHQ) and introduces the first double bond of the aromatic ring to yield 3-dehydroshikimate. The polypeptide is 3-dehydroquinate dehydratase (Streptococcus thermophilus (strain ATCC BAA-491 / LMD-9)).